The sequence spans 283 residues: Cyclin-C (283 aa).

In terms of domain architecture, Cyclin N-terminal spans 46 to 144 (NVIQALGEHL…ILECEFYLLE (99 aa)). Positions 252–283 (TILSKMPKPKPPPNSEGEQGPNGSQNSSYSQS) are disordered. The segment covering 272 to 283 (PNGSQNSSYSQS) has biased composition (polar residues). At Ser-275 the chain carries Phosphoserine.

It belongs to the cyclin family. Cyclin C subfamily. In terms of assembly, component of the Mediator complex, which is composed of MED1, MED4, MED6, MED7, MED8, MED9, MED10, MED11, MED12, MED13, MED13L, MED14, MED15, MED16, MED17, MED18, MED19, MED20, MED21, MED22, MED23, MED24, MED25, MED26, MED27, MED29, MED30, MED31, CCNC, CDK8 and CDC2L6/CDK11. The MED12, MED13, CCNC and CDK8 subunits form a distinct module termed the CDK8 module. Mediator containing the CDK8 module is less active than Mediator lacking this module in supporting transcriptional activation. Individual preparations of the Mediator complex lacking one or more distinct subunits have been variously termed ARC, CRSP, DRIP, PC2, SMCC and TRAP. The cylin/CDK pair formed by CCNC/CDK8 also associates with the large subunit of RNA polymerase II. As to expression, highest levels in pancreas. High levels in heart, liver, skeletal muscle and kidney. Low levels in brain.

The protein localises to the nucleus. Functionally, component of the Mediator complex, a coactivator involved in regulated gene transcription of nearly all RNA polymerase II-dependent genes. Mediator functions as a bridge to convey information from gene-specific regulatory proteins to the basal RNA polymerase II transcription machinery. Mediator is recruited to promoters by direct interactions with regulatory proteins and serves as a scaffold for the assembly of a functional preinitiation complex with RNA polymerase II and the general transcription factors. Binds to and activates cyclin-dependent kinase CDK8 that phosphorylates the CTD (C-terminal domain) of the large subunit of RNA polymerase II (RNAp II), which may inhibit the formation of a transcription initiation complex. The sequence is that of Cyclin-C (CCNC) from Homo sapiens (Human).